Reading from the N-terminus, the 194-residue chain is ASAAPIKPPVQLFGLDGTYATALFSASAKDSSIEKTFQSVQKLSSTISKDAKVAQVLSNPALSLNSRKEVVSVLSKELKLEPVVSNLLTVLAENNRLSLFDSIAKQFSVLNDAYNGVVEATVVSAKPLDSKILNRLTKSITNSKYVGPGKTLKIKNEVDPEILGGLIVEVADKSVDLSLASKVNKLNKVLSETI.

F-type ATP synthases have 2 components, the catalytic core F(1) and the membrane-embedded component F(0), linked together by a central stalk and a peripheral stalk. The central stalk, also called rotor shaft, is often seen as part of F(1). The peripheral stalk is seen as part of F(0). F(0) contains the membrane channel next to the rotor. F-type ATP synthases form dimers but each monomer functions independently in ATP generation. The dimer consists of 18 different polypeptides: ATP1 (subunit alpha, part of F(1), 3 molecules per monomer), ATP2 (subunit beta, part of F(1), 3 molecules per monomer), ATP3 (subunit gamma, part of the central stalk), ATP4 (subunit b, part of the peripheral stalk), ATP5/OSCP (subunit 5/OSCP, part of the peripheral stalk), ATP6 (subunit a, part of the peripheral stalk), ATP7 (subunit d, part of the peripheral stalk), ATP8 (subunit 8, part of the peripheral stalk), OLI1 (subunit c, part of the rotor, 10 molecules per monomer), ATP14 (subunit h, part of the peripheral stalk), ATP15 (subunit epsilon, part of the central stalk), ATP16 (subunit delta, part of the central stalk), ATP17 (subunit f, part of the peripheral stalk), ATP18 (subunit i/j, part of the peripheral stalk). Dimer-specific subunits are ATP19 (subunit k, at interface between monomers), ATP20 (subunit g, at interface between monomers), TIM11 (subunit e, at interface between monomers). Also contains subunit L.

It localises to the mitochondrion inner membrane. Functionally, mitochondrial membrane ATP synthase (F(1)F(0) ATP synthase or Complex V) produces ATP from ADP in the presence of a proton gradient across the membrane which is generated by electron transport complexes of the respiratory chain. F-type ATP synthases consist of two structural domains, F(1) - containing the extramembraneous catalytic core, and F(0) - containing the membrane proton channel, linked together by a central stalk and a peripheral stalk. During catalysis, ATP synthesis in the catalytic domain of F(1) is coupled via a rotary mechanism of the central stalk subunits to proton translocation. Part of the complex F(0) domain and the peripheral stalk, which acts as a stator to hold the catalytic alpha/ATP1(3)beta/ATP2(3) subcomplex and subunit a/ATP6 static relative to the rotary elements. The chain is ATP synthase subunit 5, mitochondrial from Pichia angusta (Yeast).